Consider the following 224-residue polypeptide: MKQQDAALVCFSGGQDSTTCLFWAKKHFSRVEAVCFTYGQKHSLEIEVARKIAADADVPFQLLDVSLISQLDPNCSLTNASIEMDQEKPEDSYPNTFVPGRNMVFLTFAAILARGKGIYHLVTGVSEADYSGYPDCRDTFVRSLNVTLNLAMDEQFVIHTPLMDRDKSEVWELSDELGVFDLVRTQTLTCYNGVMAEGCGHCPACKLRKDGLEKYLKRKEENQK.

ATP is bound at residue 11–21; the sequence is FSGGQDSTTCL. 4 residues coordinate Zn(2+): cysteine 190, cysteine 199, cysteine 202, and cysteine 205.

Belongs to the QueC family. The cofactor is Zn(2+).

It catalyses the reaction 7-carboxy-7-deazaguanine + NH4(+) + ATP = 7-cyano-7-deazaguanine + ADP + phosphate + H2O + H(+). It functions in the pathway purine metabolism; 7-cyano-7-deazaguanine biosynthesis. In terms of biological role, catalyzes the ATP-dependent conversion of 7-carboxy-7-deazaguanine (CDG) to 7-cyano-7-deazaguanine (preQ(0)). This chain is 7-cyano-7-deazaguanine synthase, found in Parabacteroides distasonis (strain ATCC 8503 / DSM 20701 / CIP 104284 / JCM 5825 / NCTC 11152).